The primary structure comprises 191 residues: Cell division protein SepF (191 aa).

Residues 1 to 77 (MEGQDDYQLL…MGSNVIGLPG (77 aa)) form a disordered region.

It belongs to the SepF family. In terms of assembly, homodimer. Interacts with FtsZ.

The protein resides in the cytoplasm. Its function is as follows. Cell division protein that is part of the divisome complex and is recruited early to the Z-ring. Probably stimulates Z-ring formation, perhaps through the cross-linking of FtsZ protofilaments. Its function overlaps with FtsA. The protein is Cell division protein SepF of Synechococcus sp. (strain JA-2-3B'a(2-13)) (Cyanobacteria bacterium Yellowstone B-Prime).